Consider the following 175-residue polypeptide: Major oleosin NAP-II (175 aa).

The interval 1–47 (RRDQYPRDRDQYSMIGRDRDKYSMIGRDRDQYNMYGRDYSKSRQIAK) is polar. 2 repeats span residues 17–26 (RDRDKYSMIG) and 27–36 (RDRDQYNMYG). Residues 48–119 (AVTAVTAGGS…AAITVFSWIY (72 aa)) form a hydrophobic region. Transmembrane regions (helical) follow at residues 56-76 (GSLLVLSSLTLVGTVIALTVA), 78-98 (PLLVIFSPILVPALITVALLI), and 99-119 (TGFLSSGGFGIAAITVFSWIY). Residues 151–175 (AQYYGQQQTGGEDDRDRTRGTQHTT) form a disordered region.

The protein belongs to the oleosin family.

It localises to the lipid droplet. The protein resides in the membrane. Functionally, may have a structural role to stabilize the lipid body during desiccation of the seed by preventing coalescence of the oil. Probably interacts with both lipid and phospholipid moieties of lipid bodies. May also provide recognition signals for specific lipase anchorage in lipolysis during seedling growth. The protein is Major oleosin NAP-II of Brassica napus (Rape).